Consider the following 506-residue polypeptide: Lysine--tRNA ligase (506 aa).

Mg(2+) is bound by residues glutamate 416 and glutamate 423.

The protein belongs to the class-II aminoacyl-tRNA synthetase family. In terms of assembly, homodimer. Requires Mg(2+) as cofactor.

The protein resides in the cytoplasm. It carries out the reaction tRNA(Lys) + L-lysine + ATP = L-lysyl-tRNA(Lys) + AMP + diphosphate. The polypeptide is Lysine--tRNA ligase (Bordetella parapertussis (strain 12822 / ATCC BAA-587 / NCTC 13253)).